The sequence spans 420 residues: FAD-dependent monooxygenase ntnJ (420 aa).

Residues 12–31 (FRVIVVGAGIGGLSAAVALA) form a helical membrane-spanning segment. FAD-binding residues include Glu-41 and Ala-54. N-linked (GlcNAc...) asparagine glycosylation occurs at Asn-124. The active site involves Arg-187. Residue Asn-264 is glycosylated (N-linked (GlcNAc...) asparagine). FAD-binding residues include Asp-302 and Val-315.

Belongs to the paxM FAD-dependent monooxygenase family. FAD serves as cofactor.

The protein resides in the membrane. It participates in secondary metabolite biosynthesis; terpenoid biosynthesis. In terms of biological role, FAD-dependent monooxygenase; part of the gene cluster that mediates the biosynthesis of the meroterpenoids nectripenoids A and B, as well as cochliquninone D and isocochliquninone E. The pathway probably begins with the HR-PKS ntnH that catalyzes two chain-extension steps to form a reduced triketide, which then primes the SAT domain in the NR-PKS ntnG to initiate three more cycles of extension to give a linear hexaketide corresponding to the polyketide part of nectripenoids. The FAD-dependent monooxygenase ntnJ then performs an oxidative decarboxylation at C11 of the ntnH/ntnG product, via an electrophilic aromatic hydroxylation with concomitant ipso-decarboxylation. The membrane-bound polyprenyl transferase ntnF then introduces a farnesyl group before the FAD-dependent monooxygenase ntnK functions as the first epoxidase on terminal C12'-C13' olefin, followed by a second epoxidation on C7'-C8' catalyzed by ntnA. The terpene cyclase/mutase ntnI then initiates the sequential tricyclic ring formation through protonation of the terminal epoxide and catalyzes the regioselective and stereoselective 6/6/6-tricyclic ring formation. The cytochrome P450 monooxygenase ntnM may then hydroxylate C1'. This is FAD-dependent monooxygenase ntnJ from Nectria sp.